A 393-amino-acid polypeptide reads, in one-letter code: Flap endonuclease 1 (393 aa).

The segment at 1–108 (MGVLGLSKLL…SELESRRQRA (108 aa)) is N-domain. Asp-34 is a Mg(2+) binding site. Arg-74 serves as a coordination point for DNA. Residue Asp-90 participates in Mg(2+) binding. Residues 99–120 (SELESRRQRAEDAKHEFEKAKE) show a composition bias toward basic and acidic residues. The segment at 99-127 (SELESRRQRAEDAKHEFEKAKEEGDDEAM) is disordered. The segment at 126 to 257 (AMEKMSKRMV…HKAWEGIKKY (132 aa)) is I-domain. Mg(2+) is bound by residues Glu-162, Glu-164, Asp-183, and Asp-185. Glu-162 lines the DNA pocket. 2 residues coordinate DNA: Gly-235 and Asp-237. Residue Asp-237 coordinates Mg(2+). The interval 340 to 348 (TQGRLDQFF) is interaction with PCNA. Residues 358–393 (NSEASTAGTKRNRGAVALPGVLQRKSSSGHKKAVKK) form a disordered region. The span at 384-393 (SSGHKKAVKK) shows a compositional bias: basic residues.

The protein belongs to the XPG/RAD2 endonuclease family. FEN1 subfamily. Interacts with PCNA. Three molecules of FEN1 bind to one PCNA trimer with each molecule binding to one PCNA monomer. PCNA stimulates the nuclease activity without altering cleavage specificity. Mg(2+) is required as a cofactor. Post-translationally, phosphorylated. Phosphorylation upon DNA damage induces relocalization to the nuclear plasma.

It is found in the nucleus. Its subcellular location is the nucleolus. It localises to the nucleoplasm. The protein resides in the mitochondrion. Structure-specific nuclease with 5'-flap endonuclease and 5'-3' exonuclease activities involved in DNA replication and repair. During DNA replication, cleaves the 5'-overhanging flap structure that is generated by displacement synthesis when DNA polymerase encounters the 5'-end of a downstream Okazaki fragment. It enters the flap from the 5'-end and then tracks to cleave the flap base, leaving a nick for ligation. Also involved in the long patch base excision repair (LP-BER) pathway, by cleaving within the apurinic/apyrimidinic (AP) site-terminated flap. Acts as a genome stabilization factor that prevents flaps from equilibrating into structures that lead to duplications and deletions. Also possesses 5'-3' exonuclease activity on nicked or gapped double-stranded DNA, and exhibits RNase H activity. Also involved in replication and repair of rDNA and in repairing mitochondrial DNA. This is Flap endonuclease 1 from Trypanosoma brucei brucei (strain 927/4 GUTat10.1).